A 388-amino-acid chain; its full sequence is Oligogalacturonate lyase (388 aa).

The protein resides in the periplasm. The catalysed reaction is 4-(4-deoxy-alpha-D-galact-4-enuronosyl)-D-galacturonate = 2 5-dehydro-4-deoxy-D-glucuronate. It functions in the pathway glycan metabolism; pectin degradation; 2-dehydro-3-deoxy-D-gluconate from pectin: step 3/5. Involved in degradation of pectin, which causes soft-rod disease in plants. The protein is Oligogalacturonate lyase (ogl) of Dickeya dadantii (strain 3937) (Erwinia chrysanthemi (strain 3937)).